Here is a 198-residue protein sequence, read N- to C-terminus: Pyridoxal 5'-phosphate synthase subunit PdxT (198 aa).

Position 49–51 (49–51 (GES)) interacts with L-glutamine. Residue cysteine 81 is the Nucleophile of the active site. L-glutamine is bound by residues arginine 112 and 140–141 (IR). Residues histidine 176 and glutamate 178 each act as charge relay system in the active site.

Belongs to the glutaminase PdxT/SNO family. In the presence of PdxS, forms a dodecamer of heterodimers. Only shows activity in the heterodimer.

It catalyses the reaction aldehydo-D-ribose 5-phosphate + D-glyceraldehyde 3-phosphate + L-glutamine = pyridoxal 5'-phosphate + L-glutamate + phosphate + 3 H2O + H(+). The catalysed reaction is L-glutamine + H2O = L-glutamate + NH4(+). It functions in the pathway cofactor biosynthesis; pyridoxal 5'-phosphate biosynthesis. Functionally, catalyzes the hydrolysis of glutamine to glutamate and ammonia as part of the biosynthesis of pyridoxal 5'-phosphate. The resulting ammonia molecule is channeled to the active site of PdxS. This Methanocella arvoryzae (strain DSM 22066 / NBRC 105507 / MRE50) protein is Pyridoxal 5'-phosphate synthase subunit PdxT.